Here is a 240-residue protein sequence, read N- to C-terminus: Uridylate kinase (240 aa).

12 to 15 (KLSG) lines the ATP pocket. Residues 20–25 (GSQGFG) are involved in allosteric activation by GTP. Gly-54 contacts UMP. Positions 55 and 59 each coordinate ATP. Residues Asp-74 and 135-142 (TGNPYFST) contribute to the UMP site. Residues Tyr-168 and Asp-171 each contribute to the ATP site.

This sequence belongs to the UMP kinase family. As to quaternary structure, homohexamer.

The protein resides in the cytoplasm. It carries out the reaction UMP + ATP = UDP + ADP. The protein operates within pyrimidine metabolism; CTP biosynthesis via de novo pathway; UDP from UMP (UMPK route): step 1/1. Allosterically activated by GTP. Inhibited by UTP. Catalyzes the reversible phosphorylation of UMP to UDP. This is Uridylate kinase from Desulfitobacterium hafniense (strain Y51).